The following is a 156-amino-acid chain: Small ribosomal subunit protein uS7 (156 aa).

The protein belongs to the universal ribosomal protein uS7 family. In terms of assembly, part of the 30S ribosomal subunit. Contacts proteins S9 and S11.

Its function is as follows. One of the primary rRNA binding proteins, it binds directly to 16S rRNA where it nucleates assembly of the head domain of the 30S subunit. Is located at the subunit interface close to the decoding center, probably blocks exit of the E-site tRNA. This Xanthobacter autotrophicus (strain ATCC BAA-1158 / Py2) protein is Small ribosomal subunit protein uS7.